A 658-amino-acid chain; its full sequence is UvrABC system protein B (658 aa).

The Helicase ATP-binding domain occupies Ala-26 to Pro-414. Gly-39–Thr-46 provides a ligand contact to ATP. The Beta-hairpin signature appears at Tyr-92–Ile-115. In terms of domain architecture, Helicase C-terminal spans Gln-430 to Ile-592. The region spanning Asp-622–Gly-658 is the UVR domain.

This sequence belongs to the UvrB family. Forms a heterotetramer with UvrA during the search for lesions. Interacts with UvrC in an incision complex.

It is found in the cytoplasm. Its function is as follows. The UvrABC repair system catalyzes the recognition and processing of DNA lesions. A damage recognition complex composed of 2 UvrA and 2 UvrB subunits scans DNA for abnormalities. Upon binding of the UvrA(2)B(2) complex to a putative damaged site, the DNA wraps around one UvrB monomer. DNA wrap is dependent on ATP binding by UvrB and probably causes local melting of the DNA helix, facilitating insertion of UvrB beta-hairpin between the DNA strands. Then UvrB probes one DNA strand for the presence of a lesion. If a lesion is found the UvrA subunits dissociate and the UvrB-DNA preincision complex is formed. This complex is subsequently bound by UvrC and the second UvrB is released. If no lesion is found, the DNA wraps around the other UvrB subunit that will check the other stand for damage. The protein is UvrABC system protein B of Listeria monocytogenes serovar 1/2a (strain ATCC BAA-679 / EGD-e).